A 394-amino-acid polypeptide reads, in one-letter code: Cytochrome b (394 aa).

Helical transmembrane passes span 39 to 59, 83 to 105, 120 to 140, and 186 to 206; these read FGSLAGICLVIQIVTGVFLAM, WLLRYMHANGASMFFIVVYLHTF, VWCLGVVIFLLMIVTAFIGYV, and FFSLYHLLPFILVGASLLHLA. Residues His89 and His103 each contribute to the heme b site. Positions 191 and 204 each coordinate heme b. His209 is a binding site for a ubiquinone. Helical transmembrane passes span 232 to 252, 296 to 316, 328 to 348, and 355 to 374; these read FYVKDLVGWVAFAIFFSIWIF, AGGVAAIALVFICLLALPFFK, IYQGIFWLLLADCLLLGWIGC, and FVTIGQISSIVFFLFFAITP.

Belongs to the cytochrome b family. The main subunits of complex b-c1 are: cytochrome b, cytochrome c1 and the Rieske protein. Heme b serves as cofactor.

It is found in the mitochondrion inner membrane. Its function is as follows. Component of the ubiquinol-cytochrome c reductase complex (complex III or cytochrome b-c1 complex) that is part of the mitochondrial respiratory chain. The b-c1 complex mediates electron transfer from ubiquinol to cytochrome c. Contributes to the generation of a proton gradient across the mitochondrial membrane that is then used for ATP synthesis. The polypeptide is Cytochrome b (MT-CYB) (Oenothera berteroana (Bertero's evening primrose)).